A 329-amino-acid polypeptide reads, in one-letter code: Phospho-N-acetylmuramoyl-pentapeptide-transferase (329 aa).

The next 9 helical transmembrane spans lie at 1 to 21 (MLLN…IGIP), 53 to 73 (MGGF…ALVF), 76 to 96 (FSPA…IGFL), 109 to 129 (GLTA…SYFI), 141 to 161 (ILSW…IWLV), 175 to 195 (GLAS…AVVH), 198 to 218 (YDVL…FVFN), 237 to 257 (FLAI…IGAV), and 309 to 329 (IVFW…YFAF).

Belongs to the glycosyltransferase 4 family. MraY subfamily. Requires Mg(2+) as cofactor.

Its subcellular location is the cell membrane. It catalyses the reaction UDP-N-acetyl-alpha-D-muramoyl-L-alanyl-gamma-D-glutamyl-L-lysyl-D-alanyl-D-alanine + di-trans,octa-cis-undecaprenyl phosphate = Mur2Ac(oyl-L-Ala-gamma-D-Glu-L-Lys-D-Ala-D-Ala)-di-trans,octa-cis-undecaprenyl diphosphate + UMP. It participates in cell wall biogenesis; peptidoglycan biosynthesis. Catalyzes the initial step of the lipid cycle reactions in the biosynthesis of the cell wall peptidoglycan: transfers peptidoglycan precursor phospho-MurNAc-pentapeptide from UDP-MurNAc-pentapeptide onto the lipid carrier undecaprenyl phosphate, yielding undecaprenyl-pyrophosphoryl-MurNAc-pentapeptide, known as lipid I. This chain is Phospho-N-acetylmuramoyl-pentapeptide-transferase, found in Lactococcus lactis subsp. cremoris (strain MG1363).